Consider the following 372-residue polypeptide: DNA replication and repair protein RecF (372 aa).

30–37 is an ATP binding site; the sequence is GDNGQGKT.

The protein belongs to the RecF family.

The protein localises to the cytoplasm. In terms of biological role, the RecF protein is involved in DNA metabolism; it is required for DNA replication and normal SOS inducibility. RecF binds preferentially to single-stranded, linear DNA. It also seems to bind ATP. The polypeptide is DNA replication and repair protein RecF (Ruminiclostridium cellulolyticum (strain ATCC 35319 / DSM 5812 / JCM 6584 / H10) (Clostridium cellulolyticum)).